The primary structure comprises 469 residues: Cytoplasmic tRNA 2-thiolation protein 2 (469 aa).

This sequence belongs to the CTU2/NCS2 family.

The protein localises to the cytoplasm. Its pathway is tRNA modification; 5-methoxycarbonylmethyl-2-thiouridine-tRNA biosynthesis. In terms of biological role, plays a central role in 2-thiolation of mcm(5)S(2)U at tRNA wobble positions of tRNA(Lys), tRNA(Glu) and tRNA(Gln). May act by forming a heterodimer with NCS6 that ligates sulfur from thiocarboxylated URM1 onto the uridine of tRNAs at wobble position. Prior mcm(5) tRNA modification by the elongator complex is required for 2-thiolation. May also be involved in protein urmylation. The polypeptide is Cytoplasmic tRNA 2-thiolation protein 2 (Candida glabrata (strain ATCC 2001 / BCRC 20586 / JCM 3761 / NBRC 0622 / NRRL Y-65 / CBS 138) (Yeast)).